A 237-amino-acid polypeptide reads, in one-letter code: E3 ubiquitin-protein ligase RNF166 (237 aa).

Residues 33 to 73 form an RING-type zinc finger; the sequence is CPICLEVYHRPVAIGSCGHTFCGECLQPCLQVPSPLCPLCR. Residues Cys-98, Cys-101, His-113, and Cys-117 each contribute to the Zn(2+) site. The C2HC RNF-type zinc finger occupies 98–117; sequence CRGCNKKVTLAKMRAHISSC. The 17-residue stretch at 221-237 folds into the UIM domain; sequence DEEAAFQAALALSLSEN.

The protein localises to the cytoplasm. It carries out the reaction S-ubiquitinyl-[E2 ubiquitin-conjugating enzyme]-L-cysteine + [acceptor protein]-L-lysine = [E2 ubiquitin-conjugating enzyme]-L-cysteine + N(6)-ubiquitinyl-[acceptor protein]-L-lysine.. It functions in the pathway protein modification; protein ubiquitination. Functionally, E3 ubiquitin-protein ligase that promotes the ubiquitination of different substrates. In turn, participates in different biological processes including interferon production or autophagy. Plays a role in the activation of RNA virus-induced interferon-beta production by promoting the ubiquitination of TRAF3 and TRAF6. Also plays a role in the early recruitment of autophagy adapters to bacteria. Mediates 'Lys-29' and 'Lys-33'-linked ubiquitination of SQSTM1 leading to xenophagic targeting of bacteria and inhibition of their replication. The sequence is that of E3 ubiquitin-protein ligase RNF166 (Rnf166) from Mus musculus (Mouse).